We begin with the raw amino-acid sequence, 178 residues long: uncharacterized protein (178 aa).

This is an uncharacterized protein from Rhizobium fredii (Sinorhizobium fredii).